A 199-amino-acid chain; its full sequence is Transgelin-3 (199 aa).

The Calponin-homology (CH) domain occupies 24 to 136 (ADLENKLVDW…RTLMALGSVA (113 aa)). At Ser163 the chain carries Phosphoserine. A Calponin-like repeat occupies 174–199 (IGLQMGSNKGASQAGMTGYGMPRQIM). The segment covering 178–188 (MGSNKGASQAG) has biased composition (polar residues). The segment at 178–199 (MGSNKGASQAGMTGYGMPRQIM) is disordered.

The protein belongs to the calponin family. As to expression, abundant and ubiquitous expression in neurons.

The chain is Transgelin-3 (Tagln3) from Rattus norvegicus (Rat).